The following is a 78-amino-acid chain: Acyl carrier protein (78 aa).

In terms of domain architecture, Carrier spans S2–Q77. S37 is modified (O-(pantetheine 4'-phosphoryl)serine).

The protein belongs to the acyl carrier protein (ACP) family. Post-translationally, 4'-phosphopantetheine is transferred from CoA to a specific serine of apo-ACP by AcpS. This modification is essential for activity because fatty acids are bound in thioester linkage to the sulfhydryl of the prosthetic group.

It localises to the cytoplasm. It functions in the pathway lipid metabolism; fatty acid biosynthesis. In terms of biological role, carrier of the growing fatty acid chain in fatty acid biosynthesis. The polypeptide is Acyl carrier protein (Tolumonas auensis (strain DSM 9187 / NBRC 110442 / TA 4)).